Here is a 67-residue protein sequence, read N- to C-terminus: Brevinin-1CDYa (67 aa).

A signal peptide spans M1–C22. A propeptide spanning residues E23–E45 is cleaved from the precursor. An intrachain disulfide couples C61 to C67.

The protein belongs to the frog skin active peptide (FSAP) family. Brevinin subfamily. Expressed by the skin glands.

The protein resides in the secreted. Antimicrobial peptide. Has low activity against the Gram-positive bacterium S.aureus (MIC=12.5 uM) and the Gram-negative bacterium E.coli (MIC=25 uM). Has weak hemolytic activity against human erythrocytes. In Rana dybowskii (Dybovsky's frog), this protein is Brevinin-1CDYa.